Here is a 365-residue protein sequence, read N- to C-terminus: Fructose-1,6-bisphosphatase class 1 2 (365 aa).

Residues E100, D122, L124, and D125 each contribute to the Mg(2+) site. Residues 125 to 128 and N221 contribute to the substrate site; that span reads DGSS. A Mg(2+)-binding site is contributed by E293.

Belongs to the FBPase class 1 family. As to quaternary structure, homotetramer. The cofactor is Mg(2+).

The protein localises to the cytoplasm. It catalyses the reaction beta-D-fructose 1,6-bisphosphate + H2O = beta-D-fructose 6-phosphate + phosphate. It participates in carbohydrate biosynthesis; gluconeogenesis. This Cupriavidus metallidurans (strain ATCC 43123 / DSM 2839 / NBRC 102507 / CH34) (Ralstonia metallidurans) protein is Fructose-1,6-bisphosphatase class 1 2.